Here is a 574-residue protein sequence, read N- to C-terminus: DNA polymerase I (574 aa).

The 158-residue stretch at 4–161 (EYVTGEEGLK…ELFPKMRDML (158 aa)) folds into the 3'-5' exonuclease domain.

It belongs to the DNA polymerase type-A family.

The catalysed reaction is DNA(n) + a 2'-deoxyribonucleoside 5'-triphosphate = DNA(n+1) + diphosphate. In Aquifex aeolicus (strain VF5), this protein is DNA polymerase I (polA).